Reading from the N-terminus, the 188-residue chain is Threonylcarbamoyl-AMP synthase (188 aa).

The YrdC-like domain occupies 3-188 (QLSSTQVTPV…RSGLVLRNGQ (186 aa)).

The protein belongs to the SUA5 family. TsaC subfamily.

The protein localises to the cytoplasm. It catalyses the reaction L-threonine + hydrogencarbonate + ATP = L-threonylcarbamoyladenylate + diphosphate + H2O. In terms of biological role, required for the formation of a threonylcarbamoyl group on adenosine at position 37 (t(6)A37) in tRNAs that read codons beginning with adenine. Catalyzes the conversion of L-threonine, HCO(3)(-)/CO(2) and ATP to give threonylcarbamoyl-AMP (TC-AMP) as the acyladenylate intermediate, with the release of diphosphate. In Shewanella denitrificans (strain OS217 / ATCC BAA-1090 / DSM 15013), this protein is Threonylcarbamoyl-AMP synthase.